A 274-amino-acid polypeptide reads, in one-letter code: 4-diphosphocytidyl-2-C-methyl-D-erythritol kinase (274 aa).

The active site involves Lys-10. 101-111 (PTQAGLGGGSA) serves as a coordination point for ATP. Asp-143 is a catalytic residue.

It belongs to the GHMP kinase family. IspE subfamily.

The enzyme catalyses 4-CDP-2-C-methyl-D-erythritol + ATP = 4-CDP-2-C-methyl-D-erythritol 2-phosphate + ADP + H(+). The protein operates within isoprenoid biosynthesis; isopentenyl diphosphate biosynthesis via DXP pathway; isopentenyl diphosphate from 1-deoxy-D-xylulose 5-phosphate: step 3/6. In terms of biological role, catalyzes the phosphorylation of the position 2 hydroxy group of 4-diphosphocytidyl-2C-methyl-D-erythritol. In Helicobacter pylori (strain J99 / ATCC 700824) (Campylobacter pylori J99), this protein is 4-diphosphocytidyl-2-C-methyl-D-erythritol kinase.